The primary structure comprises 2471 residues: Neurogenic locus notch homolog protein 2 (2471 aa).

The N-terminal stretch at 1–25 (MPALRPALLWALLALWLCCAAPAHA) is a signal peptide. 4 EGF-like domains span residues 26 to 63 (LQCR…EYCQ), 64 to 102 (HRDP…EDCQ), 105 to 143 (TSHP…KECQ), and 144 to 180 (WTDA…QKCE). The Extracellular segment spans residues 26-1677 (LQCRDGYEPC…SESLTPERTQ (1652 aa)). Disulfide bonds link C28/C41, C35/C51, C53/C62, C68/C79, C73/C90, C92/C101, C109/C121, C115/C131, C133/C142, C148/C159, C153/C168, C170/C179, C186/C198, C192/C207, C209/C218, C225/C236, C230/C246, C248/C257, C264/C275, C269/C284, C286/C295, C302/C315, C309/C324, C326/C335, C342/C353, C347/C362, C364/C373, C379/C390, C384/C401, C403/C412, C419/C433, C427/C442, C444/C453, C460/C471, C465/C480, C482/C491, C498/C509, C503/C518, C520/C529, C536/C547, C541/C556, C558/C567, C574/C584, C579/C593, C595/C604, C611/C622, C616/C631, C633/C642, C649/C659, C654/C668, C670/C679, C686/C697, C691/C706, C708/C717, C724/C734, C729/C743, C745/C754, C761/C772, C766/C781, C783/C792, C799/C810, C804/C819, C821/C830, C837/C848, C842/C859, C861/C870, C877/C888, C882/C897, C899/C908, C915/C926, C920/C935, C937/C946, C953/C964, C958/C973, C975/C984, C991/C1002, C996/C1011, C1013/C1022, C1029/C1040, C1034/C1049, C1051/C1060, C1067/C1078, C1072/C1087, and C1089/C1098. Residue N46 is glycosylated (N-linked (GlcNAc...) asparagine). A glycan (N-linked (GlcNAc...) asparagine) is linked at N155. The region spanning 182 to 219 (DVNECDIPGHCQHGGTCLNLPGSYQCQCPQGFTGQYCD) is the EGF-like 5; calcium-binding domain. One can recognise an EGF-like 6 domain in the interval 221 to 258 (LYVPCAPSPCVNGGTCRQTGDFTFECNCLPGFEGSTCE). Residues 260 to 296 (NIDDCPNHRCQNGGVCVDGVNTYNCRCPPQWTGQFCT) enclose the EGF-like 7; calcium-binding domain. The EGF-like 8; calcium-binding domain occupies 298–336 (DVDECLLQPNACQNGGTCANRNGGYGCVCVNGWSGDDCS). Residues 338–374 (NIDDCAFASCTPGSTCIDRVASFSCMCPEGKAGLLCH) enclose the EGF-like 9; calcium-binding domain. The EGF-like 10 domain maps to 375-413 (LDDACISNPCHKGALCDTNPLNGQYICTCPQGYKGADCT). The 40-residue stretch at 415–454 (DVDECAMANSNPCEHAGKCVNTDGAFHCECLKGYAGPRCE) folds into the EGF-like 11; calcium-binding domain. The region spanning 456-492 (DINECHSDPCQNDATCLDKIGGFTCLCMPGFKGVHCE) is the EGF-like 12; calcium-binding domain. In terms of domain architecture, EGF-like 13; calcium-binding spans 494–530 (EINECQSNPCVNNGQCVDKVNRFQCLCPPGFTGPVCQ). Positions 532–568 (DIDDCSSTPCLNGAKCIDHPNGYECQCATGFTGVLCE) constitute an EGF-like 14; calcium-binding domain. The region spanning 570–605 (NIDNCDPDPCHHGQCQDGIDSYTCICNPGYMGAICS) is the EGF-like 15; calcium-binding domain. The EGF-like 16; calcium-binding domain maps to 607–643 (QIDECYSSPCLNDGRCIDLVNGYQCNCQPGTSGVNCE). The O-linked (Glc...) serine; alternate glycan is linked to S613. S613 is a glycosylation site (O-linked (Xyl...) serine; alternate). The EGF-like 17; calcium-binding domain occupies 645–680 (NFDDCASNPCIHGICMDGINRYSCVCSPGFTGQRCN). Residues 682–718 (DIDECASNPCRKGATCINGVNGFRCICPEGPHHPSCY) form the EGF-like 18; calcium-binding domain. Residues 720–755 (QVNECLSNPCIHGNCTGGLSGYKCLCDAGWVGINCE) enclose the EGF-like 19 domain. N733 carries an N-linked (GlcNAc...) asparagine glycan. The region spanning 757 to 793 (DKNECLSNPCQNGGTCDNLVNGYRCTCKKGFKGYNCQ) is the EGF-like 20; calcium-binding domain. The EGF-like 21; calcium-binding domain occupies 795 to 831 (NIDECASNPCLNQGTCFDDISGYTCHCVLPYTGKNCQ). In terms of domain architecture, EGF-like 22 spans 833 to 871 (VLAPCSPNPCENAAVCKESPNFESYTCLCAPGWQGQRCT). In terms of domain architecture, EGF-like 23; calcium-binding spans 873-909 (DIDECISKPCMNHGLCHNTQGSYMCECPPGFSGMDCE). One can recognise an EGF-like 24; calcium-binding domain in the interval 911–947 (DIDDCLANPCQNGGSCMDGVNTFSCLCLPGFTGDKCQ). The 37-residue stretch at 949–985 (DMNECLSEPCKNGGTCSDYVNSYTCKCQAGFDGVHCE) folds into the EGF-like 25; calcium-binding domain. The EGF-like 26; calcium-binding domain occupies 987–1023 (NINECTESSCFNGGTCVDGINSFSCLCPVGFTGSFCL). An EGF-like 27; calcium-binding domain is found at 1025–1061 (EINECSSHPCLNEGTCVDGLGTYRCSCPLGYTGKNCQ). 2 EGF-like domains span residues 1063–1099 (LVNL…AYCD) and 1101–1147 (PNVS…SYCE). Residue N1102 is glycosylated (N-linked (GlcNAc...) asparagine). Intrachain disulfides connect C1105–C1126, C1120–C1135, C1137–C1146, C1153–C1164, C1158–C1173, C1175–C1184, C1191–C1202, C1196–C1211, C1213–C1222, C1229–C1241, C1235–C1250, C1252–C1261, C1268–C1281, C1273–C1290, C1292–C1301, C1308–C1319, C1313–C1331, C1333–C1342, C1378–C1389, C1383–C1400, C1402–C1411, C1425–C1448, C1430–C1443, and C1439–C1455. An EGF-like 30; calcium-binding domain is found at 1149-1185 (QLDECASNPCQHGATCSDFIGGYRCECVPGYQGVNCE). Residues 1187–1223 (EVDECQNQPCQNGGTCIDLVNHFKCSCPPGTRGLLCE) form the EGF-like 31; calcium-binding domain. The region spanning 1225–1262 (NIDDCARGPHCLNGGQCMDRIGGYSCRCLPGFAGERCE) is the EGF-like 32; calcium-binding domain. EGF-like domains are found at residues 1264–1302 (DINE…RHCE), 1304–1343 (FVDV…ARCQ), and 1374–1412 (CESG…SRCE). LNR repeat units follow at residues 1425 to 1465 (CLSQ…PWAN), 1466 to 1502 (CSSP…NSKT), and 1503 to 1544 (CKYD…NLAE). A negative regulatory region (NRR) region spans residues 1425–1677 (CLSQYCADKA…SESLTPERTQ (253 aa)). A glycan (N-linked (GlcNAc...) asparagine) is linked at N1465. Cystine bridges form between C1466/C1489, C1472/C1484, C1480/C1496, C1503/C1527, C1509/C1522, C1518/C1534, and C1632/C1639. A helical membrane pass occupies residues 1678–1698 (LLYLLAVAVVIILFIILLGVI). Residues 1699-2471 (MAKRKRKHGS…PPHNNMQVYA (773 aa)) lie on the Cytoplasmic side of the membrane. T1716 carries the phosphothreonine modification. The disordered stretch occupies residues 1754-1788 (TSEHWVDDEGPQPKKVKAEDEALLSEEDDPIDRRP). Acidic residues predominate over residues 1774–1783 (EALLSEEDDP). A Phosphoserine modification is found at S1778. Phosphothreonine is present on T1802. The residue at position 1804 (S1804) is a Phosphoserine. The residue at position 1808 (T1808) is a Phosphothreonine. ANK repeat units lie at residues 1827–1871 (DGCT…SLQA), 1876–1905 (TGEM…DANA), 1909–1939 (MGRC…DLDA), 1943–1972 (DGTT…DVNA), 1976–2005 (HGKS…NRDM), and 2009–2038 (KEET…NRDI). A phosphoserine mark is found at S1842 and S1845. Residues S2070, S2078, and S2081 each carry the phosphoserine modification. Disordered regions lie at residues 2091–2168 (FLSL…TSSP) and 2380–2471 (VGKY…QVYA). T2097 bears the Phosphothreonine mark. Basic residues predominate over residues 2098–2107 (PMGKKSRRPS). 4 stretches are compositionally biased toward polar residues: residues 2108-2117 (AKSTMPTSLP), 2137-2150 (EKVQ…TLSP), 2159-2168 (TYVSDTTSSP), and 2388-2406 (SQHS…SHSG). The span at 2417 to 2445 (PSPESPDQWSSSSPHSASDWSDVTTSPTP) shows a compositional bias: low complexity.

The protein belongs to the NOTCH family. In terms of assembly, heterodimer of a C-terminal fragment N(TM) and an N-terminal fragment N(EC) which are probably linked by disulfide bonds. Interacts with MAML1, MAML2 and MAML3 which act as transcriptional coactivators for NOTCH2. Interacts with RELA/p65. Interacts with HIF1AN. Interacts (via ANK repeats) with TCIM, the interaction inhibits the nuclear translocation of NOTCH2 N2ICD. Interacts with CUL1, RBX1, SKP1 and FBXW7 that are SCF(FBXW7) E3 ubiquitin-protein ligase complex components. Interacts with MINAR1; this interaction increases MINAR1 stability and function. Interacts with NOTCH2NL (NOTCH2NLA, NOTCH2NLB and/or NOTCH2NLC); leading to enhance Notch signaling pathway in a non-cell-autonomous manner. Interacts with MDK; this interaction mediates a nuclear accumulation of NOTCH2 and therefore activation of NOTCH2 signaling leading to interaction between HES1 and STAT3. Interacts with MINAR2. In terms of processing, synthesized in the endoplasmic reticulum as an inactive form which is proteolytically cleaved by a furin-like convertase in the trans-Golgi network before it reaches the plasma membrane to yield an active, ligand-accessible form. Cleavage results in a C-terminal fragment N(TM) and a N-terminal fragment N(EC). Following ligand binding, it is cleaved by TNF-alpha converting enzyme (TACE) to yield a membrane-associated intermediate fragment called notch extracellular truncation (NEXT). This fragment is then cleaved by presenilin dependent gamma-secretase to release a notch-derived peptide containing the intracellular domain (NICD) from the membrane. Hydroxylated by HIF1AN. Post-translationally, can be either O-glucosylated or O-xylosylated at Ser-613 by POGLUT1. In terms of processing, phosphorylated by GSK3. GSK3-mediated phosphorylation is necessary for NOTCH2 recognition by FBXW7, ubiquitination and degradation via the ubiquitin proteasome pathway. As to expression, expressed in the brain, heart, kidney, lung, skeletal muscle and liver. Ubiquitously expressed in the embryo.

It localises to the cell membrane. The protein resides in the nucleus. The protein localises to the cytoplasm. Functions as a receptor for membrane-bound ligands Jagged-1 (JAG1), Jagged-2 (JAG2) and Delta-1 (DLL1) to regulate cell-fate determination. Upon ligand activation through the released notch intracellular domain (NICD) it forms a transcriptional activator complex with RBPJ/RBPSUH and activates genes of the enhancer of split locus. Affects the implementation of differentiation, proliferation and apoptotic programs. Involved in bone remodeling and homeostasis. In collaboration with RELA/p65 enhances NFATc1 promoter activity and positively regulates RANKL-induced osteoclast differentiation. Positively regulates self-renewal of liver cancer cells. This chain is Neurogenic locus notch homolog protein 2, found in Homo sapiens (Human).